Reading from the N-terminus, the 233-residue chain is Probable fimbrial chaperone protein ElfD (233 aa).

The signal sequence occupies residues 1–26 (MKTCITKGIVTVSLTAILLSCSSTWA).

The protein belongs to the periplasmic pilus chaperone family.

It localises to the periplasm. In terms of biological role, part of the elfADCG fimbrial operon, which could be required for adherence to host epithelial cells. Could be required for the biogenesis of the ElfA fimbriae. This is Probable fimbrial chaperone protein ElfD (elfD) from Escherichia coli O157:H7.